The primary structure comprises 530 residues: uncharacterized protein (530 aa).

2 stretches are compositionally biased toward polar residues: residues 60-74 and 92-103; these read LNES…SSTP and GQGTSRPLPTLS. Disordered regions lie at residues 60–103 and 121–155; these read LNES…PTLS and ASST…GLGN. Residues 131–142 show a composition bias toward basic and acidic residues; it reads PDPRDAPREGSF.

This is an uncharacterized protein from Mus musculus (Mouse).